The primary structure comprises 246 residues: Virulence plasmid protein pGP6-D (246 aa).

Belongs to the UPF0137 (pGP6-D) family.

The sequence is that of Virulence plasmid protein pGP6-D from Chlamydia muridarum (strain MoPn / Nigg).